A 358-amino-acid polypeptide reads, in one-letter code: Photosystem II protein D1 2 (358 aa).

3 helical membrane passes run Y28–T45, H117–L132, and W141–A155. H117 contributes to the chlorophyll a binding site. Pheophytin a is bound at residue Y125. [CaMn4O5] cluster contacts are provided by D169 and E188. Residues F196–L217 traverse the membrane as a helical segment. H197 contacts chlorophyll a. A quinone contacts are provided by residues H214 and S263–F264. Residue H214 coordinates Fe cation. H271 serves as a coordination point for Fe cation. The helical transmembrane segment at F273–M287 threads the bilayer. [CaMn4O5] cluster-binding residues include H331, E332, D341, and A343. The propeptide occupies A344 to G358.

Belongs to the reaction center PufL/M/PsbA/D family. In terms of assembly, PSII is composed of 1 copy each of membrane proteins PsbA, PsbB, PsbC, PsbD, PsbE, PsbF, PsbH, PsbI, PsbJ, PsbK, PsbL, PsbM, PsbT, PsbX, PsbY, PsbZ, Psb30/Ycf12, peripheral proteins PsbO, CyanoQ (PsbQ), PsbU, PsbV and a large number of cofactors. It forms dimeric complexes. Requires The D1/D2 heterodimer binds P680, chlorophylls that are the primary electron donor of PSII, and subsequent electron acceptors. It shares a non-heme iron and each subunit binds pheophytin, quinone, additional chlorophylls, carotenoids and lipids. D1 provides most of the ligands for the Mn4-Ca-O5 cluster of the oxygen-evolving complex (OEC). There is also a Cl(-1) ion associated with D1 and D2, which is required for oxygen evolution. The PSII complex binds additional chlorophylls, carotenoids and specific lipids. as cofactor. Post-translationally, tyr-160 forms a radical intermediate that is referred to as redox-active TyrZ, YZ or Y-Z. C-terminally processed by CtpA; processing is essential to allow assembly of the oxygen-evolving complex and thus photosynthetic growth.

It is found in the cellular thylakoid membrane. It catalyses the reaction 2 a plastoquinone + 4 hnu + 2 H2O = 2 a plastoquinol + O2. Photosystem II (PSII) is a light-driven water:plastoquinone oxidoreductase that uses light energy to abstract electrons from H(2)O, generating O(2) and a proton gradient subsequently used for ATP formation. It consists of a core antenna complex that captures photons, and an electron transfer chain that converts photonic excitation into a charge separation. The D1/D2 (PsbA/PsbD) reaction center heterodimer binds P680, the primary electron donor of PSII as well as several subsequent electron acceptors. The protein is Photosystem II protein D1 2 of Synechococcus sp. (strain WH7803).